The chain runs to 104 residues: Protamine-2 (104 aa).

The disordered stretch occupies residues 1–91 (MVRYRMRSPS…RRGCRRSRRR (91 aa)). Phosphoserine is present on residues serine 8, serine 10, and serine 33. Over residues 33–44 (SPERVEDYGRTE) the composition is skewed to basic and acidic residues. Residues 45 to 91 (RGHHHRHRRCKRLHRIHKRRRSCRRRRRHSCRHRRRHRRGCRRSRRR) show a composition bias toward basic residues.

Belongs to the protamine P2 family. As to quaternary structure, interacts with TDRP. Proteolytic processing into mature chains is required for histone eviction during spermatogenesis. Transition proteins (TNP1 and TNP2) are required for processing. Testis.

The protein resides in the nucleus. It localises to the chromosome. Protamines substitute for histones in the chromatin of sperm during the haploid phase of spermatogenesis. They compact sperm DNA into a highly condensed, stable and inactive complex. This chain is Protamine-2 (Prm2), found in Rattus norvegicus (Rat).